We begin with the raw amino-acid sequence, 234 residues long: Nuclear ubiquitous casein and cyclin-dependent kinase substrate 1 (234 aa).

Positions 1–234 (MSRPVRNRKV…SEDEASSGED (234 aa)) are disordered. Y13 carries the post-translational modification Phosphotyrosine. Phosphoserine occurs at positions 14 and 19. The residue at position 26 (Y26) is a Phosphotyrosine. A compositionally biased stretch (basic residues) spans 35–51 (KKIRSSPREAKNKRRSG). A phosphoserine mark is found at S54, S58, S61, S73, S75, and S79. Positions 64-77 (KDVKTKKDDSHSAE) are enriched in basic and acidic residues. Residues 91–100 (QQRQAASKAA) are compositionally biased toward low complexity. A compositionally biased stretch (acidic residues) spans 111–124 (VGSEEEPEEDDEAP). S113, S130, S132, and S144 each carry phosphoserine. Residues 132–145 (SDEDFLMEDDDDSD) are compositionally biased toward acidic residues. Positions 149 to 174 (SKKKNKKMVKKSKPERKEKKMPKPRL) are enriched in basic residues. Position 179 is a phosphothreonine (T179). S181 carries the post-translational modification Phosphoserine. Residues 185–199 (GKAKVGRPTASKKSK) are compositionally biased toward basic residues. T202 carries the phosphothreonine modification. Residues S204, S214, S225, and S231 each carry the phosphoserine modification. Positions 223 to 234 (EGSEDEASSGED) are enriched in acidic residues.

In terms of assembly, does not interact with RAD51. Post-translationally, phosphorylated in an ATM-dependent manner in response to DNA damage. Phosphorylated by CDK1 and casein kinase.

The protein localises to the nucleus. It is found in the chromosome. Chromatin-associated protein involved in DNA repair by promoting homologous recombination (HR). Binds double-stranded DNA (dsDNA) and secondary DNA structures, such as D-loop structures, but with less affinity than RAD51AP1. The chain is Nuclear ubiquitous casein and cyclin-dependent kinase substrate 1 (Nucks1) from Mus musculus (Mouse).